The sequence spans 391 residues: Saxitoxin and tetrodotoxin-binding protein 1 (391 aa).

The N-terminal stretch at 1–20 is a signal peptide; sequence MGAVPGVVLLLMLAVLGIRA. 2 repeat units span residues 24–202 and 203–391. 7 N-linked (GlcNAc...) asparagine glycosylation sites follow: Asn54, Asn63, Asn97, Asn234, Asn268, Asn277, and Asn307.

As to quaternary structure, homodimer or heterodimer of PSTBP1 and PSTBP2. Glycosylated.

It is found in the secreted. In terms of biological role, binds both saxitoxin and tetradotoxin. May play a role in toxin accumulation and/or excretion. This Takifugu pardalis (Panther puffer) protein is Saxitoxin and tetrodotoxin-binding protein 1 (psbp1).